The following is a 124-amino-acid chain: MSQKWGLVHIYASYNNTILHVTDLTGAETIAKVSGGMIVRNQRDESSPYAAMQAAFKIADLMRDKGIDQVHVKVRATGGQKSKNPGPGAQAAIRALSRAGIRIGRIEDATPIPHDGTTPKRKNR.

A disordered region spans residues 102–124 (RIGRIEDATPIPHDGTTPKRKNR).

This sequence belongs to the universal ribosomal protein uS11 family. As to quaternary structure, part of the 30S ribosomal subunit.

In terms of biological role, located on the platform of the 30S subunit. This Methanococcus maripaludis (strain C5 / ATCC BAA-1333) protein is Small ribosomal subunit protein uS11.